A 153-amino-acid polypeptide reads, in one-letter code: Calmodulin-like protein 3 (153 aa).

4 consecutive EF-hand domains span residues 1-36 (MDQA…LGIY), 37-72 (IPDK…IMEE), 74-109 (DEEE…LGLK), and 112-147 (RTLE…GGFA). Residues Asp14, Asn16, Asp18, Lys20, Glu25, Asp50, Asn52, Asp54, Tyr56, Glu61, Asp87, Asn89, Asp91, Glu98, Asp125, Asp127, Asp129, Met131, and Glu136 each coordinate Ca(2+).

The protein belongs to the calmodulin family.

In terms of biological role, potential calcium sensor. The sequence is that of Calmodulin-like protein 3 (CML3) from Arabidopsis thaliana (Mouse-ear cress).